Here is a 349-residue protein sequence, read N- to C-terminus: Putative F-box/kelch-repeat protein At4g02310 (349 aa).

Residues 11–58 (SLFSLLPNDIVLNILARVPRWYHPILSCVSKNLRFLVSSSELKITRSL) form the F-box domain. Residues 154 to 204 (KIYVFGGIDDMNKRYYEGIHAQVFDLKTQTWHVGPNLSVKLACLNRSVVTP) form a Kelch repeat.

The polypeptide is Putative F-box/kelch-repeat protein At4g02310 (Arabidopsis thaliana (Mouse-ear cress)).